Consider the following 446-residue polypeptide: Glutamyl-tRNA reductase 2 (446 aa).

Substrate contacts are provided by residues threonine 53 to arginine 56, serine 105, glutamate 110 to glutamine 112, and glutamine 116. The active-site Nucleophile is the cysteine 54. Residue glycine 185–glycine 190 coordinates NADP(+). The disordered stretch occupies residues alanine 409 to threonine 446. Low complexity predominate over residues glycine 431–proline 440.

This sequence belongs to the glutamyl-tRNA reductase family. As to quaternary structure, homodimer.

It carries out the reaction (S)-4-amino-5-oxopentanoate + tRNA(Glu) + NADP(+) = L-glutamyl-tRNA(Glu) + NADPH + H(+). The protein operates within porphyrin-containing compound metabolism; protoporphyrin-IX biosynthesis; 5-aminolevulinate from L-glutamyl-tRNA(Glu): step 1/2. Functionally, catalyzes the NADPH-dependent reduction of glutamyl-tRNA(Glu) to glutamate 1-semialdehyde (GSA). In Anaeromyxobacter dehalogenans (strain 2CP-C), this protein is Glutamyl-tRNA reductase 2.